Consider the following 415-residue polypeptide: Tyrosine--tRNA ligase (415 aa).

Position 34 (Tyr34) interacts with L-tyrosine. A 'HIGH' region motif is present at residues 39-48; it reads PTADSLHLGH. Tyr164 and Gln168 together coordinate L-tyrosine. A 'KMSKS' region motif is present at residues 226-230; sequence KFGKS. Lys229 is an ATP binding site. The S4 RNA-binding domain occupies 348–415; the sequence is KNVVDFLVDG…KKKYFLGKVK (68 aa).

The protein belongs to the class-I aminoacyl-tRNA synthetase family. TyrS type 1 subfamily. Homodimer.

The protein localises to the cytoplasm. It catalyses the reaction tRNA(Tyr) + L-tyrosine + ATP = L-tyrosyl-tRNA(Tyr) + AMP + diphosphate + H(+). In terms of biological role, catalyzes the attachment of tyrosine to tRNA(Tyr) in a two-step reaction: tyrosine is first activated by ATP to form Tyr-AMP and then transferred to the acceptor end of tRNA(Tyr). In Leuconostoc mesenteroides subsp. mesenteroides (strain ATCC 8293 / DSM 20343 / BCRC 11652 / CCM 1803 / JCM 6124 / NCDO 523 / NBRC 100496 / NCIMB 8023 / NCTC 12954 / NRRL B-1118 / 37Y), this protein is Tyrosine--tRNA ligase.